Here is a 367-residue protein sequence, read N- to C-terminus: Beta sliding clamp (367 aa).

Belongs to the beta sliding clamp family. As to quaternary structure, forms a ring-shaped head-to-tail homodimer around DNA which binds and tethers DNA polymerases and other proteins to the DNA. The DNA replisome complex has a single clamp-loading complex (3 tau and 1 each of delta, delta', psi and chi subunits) which binds 3 Pol III cores (1 core on the leading strand and 2 on the lagging strand) each with a beta sliding clamp dimer. Additional proteins in the replisome are other copies of gamma, psi and chi, Ssb, DNA helicase and RNA primase.

It localises to the cytoplasm. In terms of biological role, confers DNA tethering and processivity to DNA polymerases and other proteins. Acts as a clamp, forming a ring around DNA (a reaction catalyzed by the clamp-loading complex) which diffuses in an ATP-independent manner freely and bidirectionally along dsDNA. Initially characterized for its ability to contact the catalytic subunit of DNA polymerase III (Pol III), a complex, multichain enzyme responsible for most of the replicative synthesis in bacteria; Pol III exhibits 3'-5' exonuclease proofreading activity. The beta chain is required for initiation of replication as well as for processivity of DNA replication. The protein is Beta sliding clamp (dnaN) of Proteus mirabilis.